Here is a 368-residue protein sequence, read N- to C-terminus: 3-dehydroquinate synthase (368 aa).

NAD(+)-binding positions include 80–85 (DAESAK), 114–118 (GAATD), 138–139 (TT), Lys151, and Lys160. Positions 193, 255, and 271 each coordinate Zn(2+).

Belongs to the sugar phosphate cyclases superfamily. Dehydroquinate synthase family. It depends on Co(2+) as a cofactor. The cofactor is Zn(2+). NAD(+) serves as cofactor.

The protein localises to the cytoplasm. It carries out the reaction 7-phospho-2-dehydro-3-deoxy-D-arabino-heptonate = 3-dehydroquinate + phosphate. The protein operates within metabolic intermediate biosynthesis; chorismate biosynthesis; chorismate from D-erythrose 4-phosphate and phosphoenolpyruvate: step 2/7. Catalyzes the conversion of 3-deoxy-D-arabino-heptulosonate 7-phosphate (DAHP) to dehydroquinate (DHQ). This is 3-dehydroquinate synthase from Corynebacterium jeikeium (strain K411).